An 89-amino-acid chain; its full sequence is Small ribosomal subunit protein uS15 (89 aa).

It belongs to the universal ribosomal protein uS15 family. As to quaternary structure, part of the 30S ribosomal subunit. Forms a bridge to the 50S subunit in the 70S ribosome, contacting the 23S rRNA.

One of the primary rRNA binding proteins, it binds directly to 16S rRNA where it helps nucleate assembly of the platform of the 30S subunit by binding and bridging several RNA helices of the 16S rRNA. Functionally, forms an intersubunit bridge (bridge B4) with the 23S rRNA of the 50S subunit in the ribosome. This is Small ribosomal subunit protein uS15 from Thermus thermophilus (strain ATCC BAA-163 / DSM 7039 / HB27).